The chain runs to 94 residues: Protein LURE 1.1 (94 aa).

Positions Met-1 to Ser-19 are cleaved as a signal peptide. Cystine bridges form between Cys-58–Cys-75, Cys-61–Cys-82, and Cys-65–Cys-84. Positions Arg-67–Ser-87 are PRK6 binding.

The protein belongs to the DEFL family. Binds to PRK6 LRRs. In terms of tissue distribution, expressed in the pistil. Detected exclusively in the synergid cells.

It is found in the secreted. Functionally, pollen tube attractants guiding pollen tubes to the ovular micropyle. The protein is Protein LURE 1.1 of Arabidopsis thaliana (Mouse-ear cress).